Consider the following 442-residue polypeptide: Tyrosine-protein kinase transforming protein RYK (442 aa).

Residues 45 to 316 enclose the Protein kinase domain; the sequence is LSLGKVLGEG…QLKVHLEKLL (272 aa). Residues 51–59 and lysine 77 contribute to the ATP site; that span reads LGEGEFGSV. The Proton acceptor role is filled by aspartate 181. Residue tyrosine 212 is modified to Phosphotyrosine; by autocatalysis.

The protein belongs to the protein kinase superfamily. Tyr protein kinase family. AXL/UFO subfamily.

It localises to the host cell membrane. It catalyses the reaction L-tyrosyl-[protein] + ATP = O-phospho-L-tyrosyl-[protein] + ADP + H(+). This chain is Tyrosine-protein kinase transforming protein RYK (V-RYK), found in Avian retrovirus RPL30.